A 393-amino-acid chain; its full sequence is Staphopain B (393 aa).

The N-terminal stretch at 1 to 36 (MNSSCKTRVFNIISIIMVSMLILSLGAFANNNKAKA) is a signal peptide. Positions 37–219 (DSHSKQLEIN…KVEENEAIQE (183 aa)) are excised as a propeptide. Residues Cys-243, His-340, and Asn-360 contribute to the active site.

The protein belongs to the peptidase C47 family. In terms of assembly, in the cytoplasm, prematurely activated/folded SspB forms a stable non-covalent complex with SspC. Proteolytically cleaved by staphylococcal serine protease (SspA).

The protein localises to the secreted. Prematurely activated/folded staphopain B is inhibited by staphostatin B (SspC), which is probably required to protect staphylococcal cytoplasmic proteins from degradation by SspB. In terms of biological role, cysteine protease that plays an important role in the inhibition of host innate immune response. Degrades host elastin, fibrogen, fibronectin and kininogen. Blocks phagocytosis of opsonised S.aureus by neutrophils and monocytes by inducing their death in a proteolytic activity-dependent manner. Decreases surface expression of the 'don't eat me' signal CD31 on neutrophils. Cleaves host galectin-3/LGALS3, thereby inhibiting the neutrophil-activating ability of the lectin. The protein is Staphopain B (sspB) of Staphylococcus aureus (strain MRSA252).